The primary structure comprises 783 residues: Protein DWD HYPERSENSITIVE TO UV-B 1 (783 aa).

WD repeat units follow at residues 145–198 (GEFT…LKLP) and 212–256 (SDSS…DPSL). Positions 382–389 (RKKESVVR) match the Nuclear localization signal motif. 6 WD repeats span residues 439 to 480 (DNSR…IFRY), 485 to 525 (GSQS…STVT), 538 to 577 (DEFDQLTSVHANSTDQLFLASGYSKDVALYDIGRGTRLQV), 581 to 621 (MHQE…SRPC), 625 to 664 (SSTKGNVMVCFSPDDRYLLASAVDNEVRQLLTVDGRLHLN), and 666 to 710 (EIVP…RRLR).

As to quaternary structure, interacts directly with DDB1A. Binds to COP1 and RUP1.

It localises to the nucleus. Its function is as follows. May act as a substrate receptor of a CUL4-RING E3 ubiquitin-protein ligase (CRL4) complex involved in the negative regulation of cellular responses to ultraviolet-B (UV-B) illumination, likely in coordination with RUP1. Interacts with COP1 and probably prevents the formation of active UVR8-COP1 complex, thus avoiding UVR8-COP1-mediated positive regulation of UV-B responses. This Arabidopsis thaliana (Mouse-ear cress) protein is Protein DWD HYPERSENSITIVE TO UV-B 1.